The chain runs to 181 residues: Mating-type M-specific polypeptide Mc (181 aa).

Positions Thr-103–Lys-171 form a DNA-binding region, HMG box.

The protein resides in the nucleus. In terms of biological role, mating type proteins are sequence specific DNA-binding proteins that act as master switches in yeast differentiation by controlling gene expression in a cell type-specific fashion. Positive regulator of MFM genes. The HMG box recognizes the DNA sequence 5'-AACAAAG-3'. Required for conjugation and efficient meiosis. The polypeptide is Mating-type M-specific polypeptide Mc (matMc) (Schizosaccharomyces kambucha (Fission yeast)).